A 425-amino-acid chain; its full sequence is Cyanogenic beta-glucosidase (425 aa).

An N-terminal signal peptide occupies residues 1–11 (LLSITTTHIHA). A beta-D-glucoside is bound by residues Gln44, His148, and 193–194 (NE). Glu194 (proton donor) is an active-site residue. Cys213 and Cys221 form a disulfide bridge. Asn220 is a glycosylation site (N-linked (GlcNAc...) asparagine). The a beta-D-glucoside site is built by Tyr337 and Glu408. Catalysis depends on Glu408, which acts as the Nucleophile. N-linked (GlcNAc...) asparagine glycosylation occurs at Asn412.

The protein belongs to the glycosyl hydrolase 1 family. Homodimer. Leaves.

It catalyses the reaction Hydrolysis of terminal, non-reducing beta-D-glucosyl residues with release of beta-D-glucose.. Its function is as follows. Hydrolyzes cyanoglucosides, contributing to the release of hydrocyanic acid, which functions as a defense mechanism against small predators, when the leaf tissue is damaged. The chain is Cyanogenic beta-glucosidase (LI) from Trifolium repens (Creeping white clover).